A 299-amino-acid chain; its full sequence is Ophiobolin family sesterterpenoid biosynthesis cluster acetyltransferase (299 aa).

The first 20 residues, Met1–Gly20, serve as a signal peptide directing secretion. Asn28, Asn58, Asn77, Asn126, Asn177, Asn212, and Asn282 each carry an N-linked (GlcNAc...) asparagine glycan.

It belongs to the bfoA family.

Its pathway is secondary metabolite biosynthesis; terpenoid biosynthesis. Its function is as follows. Acetyltransferase; part of the gene cluster that mediates the biosynthesis of an ophiobolin family sesterterpenoid. Functionally, sesterterpenoid synthase; part of the gene cluster that mediates the biosynthesis of an ophiobolin family sesterterpenoid. The sequence is that of Ophiobolin family sesterterpenoid biosynthesis cluster acetyltransferase from Aspergillus terreus.